We begin with the raw amino-acid sequence, 277 residues long: Phosphatidylglycerol--prolipoprotein diacylglyceryl transferase (277 aa).

4 helical membrane-spanning segments follow: residues 15 to 35 (IHVR…TFMS), 50 to 70 (IDLL…YYVI), 89 to 109 (GGIA…VFCY), and 112 to 132 (FLPP…AQVL). R134 serves as a coordination point for a 1,2-diacyl-sn-glycero-3-phospho-(1'-sn-glycerol). Transmembrane regions (helical) follow at residues 174-194 (KPTF…ILSL), 204-224 (GEVF…VEGM), and 234-254 (VIRV…ILFV).

Belongs to the Lgt family.

It localises to the cell membrane. It catalyses the reaction L-cysteinyl-[prolipoprotein] + a 1,2-diacyl-sn-glycero-3-phospho-(1'-sn-glycerol) = an S-1,2-diacyl-sn-glyceryl-L-cysteinyl-[prolipoprotein] + sn-glycerol 1-phosphate + H(+). Its pathway is protein modification; lipoprotein biosynthesis (diacylglyceryl transfer). Its function is as follows. Catalyzes the transfer of the diacylglyceryl group from phosphatidylglycerol to the sulfhydryl group of the N-terminal cysteine of a prolipoprotein, the first step in the formation of mature lipoproteins. The polypeptide is Phosphatidylglycerol--prolipoprotein diacylglyceryl transferase (Lactobacillus delbrueckii subsp. bulgaricus (strain ATCC 11842 / DSM 20081 / BCRC 10696 / JCM 1002 / NBRC 13953 / NCIMB 11778 / NCTC 12712 / WDCM 00102 / Lb 14)).